Consider the following 942-residue polypeptide: Alanine--tRNA ligase (942 aa).

Positions 586, 590, 695, and 699 each coordinate Zn(2+).

The protein belongs to the class-II aminoacyl-tRNA synthetase family. It depends on Zn(2+) as a cofactor.

It is found in the cytoplasm. It catalyses the reaction tRNA(Ala) + L-alanine + ATP = L-alanyl-tRNA(Ala) + AMP + diphosphate. Catalyzes the attachment of alanine to tRNA(Ala) in a two-step reaction: alanine is first activated by ATP to form Ala-AMP and then transferred to the acceptor end of tRNA(Ala). Also edits incorrectly charged Ser-tRNA(Ala) and Gly-tRNA(Ala) via its editing domain. The chain is Alanine--tRNA ligase from Akkermansia muciniphila (strain ATCC BAA-835 / DSM 22959 / JCM 33894 / BCRC 81048 / CCUG 64013 / CIP 107961 / Muc).